Reading from the N-terminus, the 206-residue chain is Small ribosomal subunit protein uS4 (206 aa).

The region spanning 96 to 158 is the S4 RNA-binding domain; sequence SRLDNVVYRM…AKGQLRIKGA (63 aa).

It belongs to the universal ribosomal protein uS4 family. In terms of assembly, part of the 30S ribosomal subunit. Contacts protein S5. The interaction surface between S4 and S5 is involved in control of translational fidelity.

One of the primary rRNA binding proteins, it binds directly to 16S rRNA where it nucleates assembly of the body of the 30S subunit. In terms of biological role, with S5 and S12 plays an important role in translational accuracy. The polypeptide is Small ribosomal subunit protein uS4 (Coxiella burnetii (strain CbuG_Q212) (Coxiella burnetii (strain Q212))).